Consider the following 259-residue polypeptide: Isoprenyl transferase (259 aa).

The active site involves D33. A Mg(2+)-binding site is contributed by D33. Substrate contacts are provided by residues 34 to 37 (GNRR), W38, H51, and 79 to 81 (STE). Residue N82 is the Proton acceptor of the active site. Substrate is bound by residues R86, R208, and 214–216 (RMS). E227 serves as a coordination point for Mg(2+).

The protein belongs to the UPP synthase family. In terms of assembly, homodimer. Mg(2+) is required as a cofactor.

Its function is as follows. Catalyzes the condensation of isopentenyl diphosphate (IPP) with allylic pyrophosphates generating different type of terpenoids. This is Isoprenyl transferase from Streptomyces fradiae (Streptomyces roseoflavus).